The sequence spans 50 residues: Fungus-induced-related protein 15 (50 aa).

The N-terminal stretch at 1-21 (MNFYSLFVFIALIFSFNVVHG) is a signal peptide.

In terms of biological role, may have role in hypoxia response. The protein is Fungus-induced-related protein 15 (fipr-15) of Caenorhabditis elegans.